Consider the following 475-residue polypeptide: Ribulose bisphosphate carboxylase large chain (475 aa).

Positions 1 to 2 are excised as a propeptide; sequence MS. Position 3 is an N-acetylproline (proline 3). Lysine 14 is subject to N6,N6,N6-trimethyllysine. Substrate-binding residues include asparagine 123 and threonine 173. The Proton acceptor role is filled by lysine 175. Lysine 177 lines the substrate pocket. The Mg(2+) site is built by lysine 201, aspartate 203, and glutamate 204. N6-carboxylysine is present on lysine 201. Histidine 294 (proton acceptor) is an active-site residue. Substrate-binding residues include arginine 295, histidine 327, and serine 379.

Belongs to the RuBisCO large chain family. Type I subfamily. In terms of assembly, heterohexadecamer of 8 large chains and 8 small chains; disulfide-linked. The disulfide link is formed within the large subunit homodimers. It depends on Mg(2+) as a cofactor. In terms of processing, the disulfide bond which can form in the large chain dimeric partners within the hexadecamer appears to be associated with oxidative stress and protein turnover.

The protein resides in the plastid. Its subcellular location is the chloroplast. The enzyme catalyses 2 (2R)-3-phosphoglycerate + 2 H(+) = D-ribulose 1,5-bisphosphate + CO2 + H2O. The catalysed reaction is D-ribulose 1,5-bisphosphate + O2 = 2-phosphoglycolate + (2R)-3-phosphoglycerate + 2 H(+). In terms of biological role, ruBisCO catalyzes two reactions: the carboxylation of D-ribulose 1,5-bisphosphate, the primary event in carbon dioxide fixation, as well as the oxidative fragmentation of the pentose substrate in the photorespiration process. Both reactions occur simultaneously and in competition at the same active site. This chain is Ribulose bisphosphate carboxylase large chain, found in Clarkia xantiana (Gunsight clarkia).